Reading from the N-terminus, the 816-residue chain is Nicotine 6-hydroxylase large subunit (816 aa).

Residue glutamate 745 coordinates Mo-molybdopterin cytosine dinucleotide.

Belongs to the xanthine dehydrogenase family. In terms of assembly, heterotrimer composed of a large subunit (NdhL), a medium subunit (NdhM) and a small subunit (NdhS). The cofactor is Mo-molybdopterin cytosine dinucleotide.

It is found in the cytoplasm. It catalyses the reaction (R)-nicotine + A + H2O = (R)-6-hydroxynicotine + AH2. It carries out the reaction (S)-nicotine + A + H2O = (S)-6-hydroxynicotine + AH2. It participates in alkaloid degradation; nicotine degradation; 6-hydroxypseudooxynicotine from nicotine (R-isomer route): step 1/2. The protein operates within alkaloid degradation; nicotine degradation; 6-hydroxypseudooxynicotine from nicotine (S-isomer route): step 1/2. With respect to regulation, nicotine dehydrogenase activity is inhibited by tungsten. Its function is as follows. Component of the nicotine 6-hydroxylase, which is involved in the degradation of nicotine. Catalyzes the hydroxylation of the pyridine ring at C6 to form 6-hydroxynicotine. Can use both L-nicotine and D-nicotine. The chain is Nicotine 6-hydroxylase large subunit from Paenarthrobacter nicotinovorans (Arthrobacter nicotinovorans).